The primary structure comprises 464 residues: ATP synthase subunit beta (464 aa).

153–160 (GGAGVGKT) contributes to the ATP binding site.

Belongs to the ATPase alpha/beta chains family. F-type ATPases have 2 components, CF(1) - the catalytic core - and CF(0) - the membrane proton channel. CF(1) has five subunits: alpha(3), beta(3), gamma(1), delta(1), epsilon(1). CF(0) has three main subunits: a(1), b(2) and c(9-12). The alpha and beta chains form an alternating ring which encloses part of the gamma chain. CF(1) is attached to CF(0) by a central stalk formed by the gamma and epsilon chains, while a peripheral stalk is formed by the delta and b chains.

The protein localises to the cell inner membrane. The catalysed reaction is ATP + H2O + 4 H(+)(in) = ADP + phosphate + 5 H(+)(out). Its function is as follows. Produces ATP from ADP in the presence of a proton gradient across the membrane. The catalytic sites are hosted primarily by the beta subunits. The polypeptide is ATP synthase subunit beta (Burkholderia ambifaria (strain MC40-6)).